The chain runs to 474 residues: B-cell CLL/lymphoma 6 member B protein (474 aa).

The 68-residue stretch at 38–105 folds into the BTB domain; the sequence is TDVTLLVGGQ…MYTSRLRLSP (68 aa). Disordered stretches follow at residues 144–190 and 210–249; these read PVEV…PDPK and GSLVGESSGQPCPQARLPSGDEACSSSSSSEEGTTPGLQS. Over residues 150–160 the composition is skewed to pro residues; it reads PRPPTVAPPGS. Residues 162–172 show a composition bias toward basic and acidic residues; the sequence is RRSEGHPDPPT. Composition is skewed to polar residues over residues 173–183, 210–220, and 240–249; these read ESRSCSQGSPS, GSLVGESSGQP, and EEGTTPGLQS. C2H2-type zinc fingers lie at residues 323-345, 351-373, 379-401, 407-429, and 435-458; these read YKCQLCRSAFRYKGNLASHRTVH, YRCSICGARFNRPANLKTHSRIH, YKCETCGSRFVQVAHLRAHVLIH, YPCPTCGTRFRHLQTLKSHVRIH, and YHCDPCGLHFRHKSQLRLHLRQKH.

In terms of assembly, associates with BCL6 through the BTB domain. Ubiquitously expressed with higher expression found in heart and lung.

Its subcellular location is the nucleus. In terms of biological role, acts as a sequence-specific transcriptional repressor in association with BCL6. Necessary for activation of naive T-cells to antigenic stimulation. May attenuate the regulatory effect of BCL6 on antigenic activation of naive CD4 T-cells by forming a heterodimer with BCL6. This Mus musculus (Mouse) protein is B-cell CLL/lymphoma 6 member B protein (Bcl6b).